The following is a 104-amino-acid chain: Flagellar hook-basal body complex protein FliE (104 aa).

It belongs to the FliE family.

It localises to the bacterial flagellum basal body. The chain is Flagellar hook-basal body complex protein FliE from Salmonella arizonae (strain ATCC BAA-731 / CDC346-86 / RSK2980).